The chain runs to 215 residues: MVSALRGAPLIRVHSSPVSSPSVSGPRRLVSCLSSQSSALSQSGGGSTSAAGIEARSRALRRRWCPAGIMLLALVCLLSCLLPSSEAKLYGRCELARVLHDFGLDGYRGYSLADWVCLAYFTSGFNAAALDYEADGSTNNGIFQINSRRWCSNLTPNVPNVCRMYCSDLLNPNLKDTVICAMKITQEPQGLGYWEAWRHHCQGKDLTEWVDGCDF.

At 1–63 (MVSALRGAPL…EARSRALRRR (63 aa)) the chain is on the cytoplasmic side. The chain crosses the membrane as a helical; Signal-anchor for type II membrane protein span at residues 64 to 84 (WCPAGIMLLALVCLLSCLLPS). The Extracellular portion of the chain corresponds to 85–215 (SEAKLYGRCE…LTEWVDGCDF (131 aa)). The C-type lysozyme domain maps to 88–215 (KLYGRCELAR…LTEWVDGCDF (128 aa)). 4 cysteine pairs are disulfide-bonded: Cys93-Cys213, Cys117-Cys201, Cys151-Cys166, and Cys162-Cys180.

This sequence belongs to the glycosyl hydrolase 22 family. As to quaternary structure, interacts with ASTL. The processed form derives from the membrane form by proteolytic processing. As to expression, the processed form is expressed in sperm (at protein level). Expressed in testis, epididymis and placenta.

It is found in the cytoplasmic vesicle. The protein localises to the secretory vesicle. It localises to the acrosome membrane. Its subcellular location is the secreted. Its function is as follows. Sperm surface membrane protein that may be involved in sperm-egg plasma membrane adhesion and fusion during fertilization. It could be a potential receptor for the egg oligosaccharide residue N-acetylglucosamine, which is present in the extracellular matrix over the egg plasma membrane. The processed form has no detectable bacteriolytic activity in vitro. This is Sperm acrosome membrane-associated protein 3 (SPACA3) from Homo sapiens (Human).